We begin with the raw amino-acid sequence, 1404 residues long: DNA-directed RNA polymerase subunit beta' (1404 aa).

Residues C70, C72, C85, and C88 each contribute to the Zn(2+) site. Positions 460, 462, and 464 each coordinate Mg(2+). Residues C814, C889, C896, and C899 each contribute to the Zn(2+) site. The segment at 1377–1404 (DSEMETLSGKPAAAEPVAAVADAGADEE) is disordered. Positions 1387 to 1404 (PAAAEPVAAVADAGADEE) are enriched in low complexity.

It belongs to the RNA polymerase beta' chain family. As to quaternary structure, the RNAP catalytic core consists of 2 alpha, 1 beta, 1 beta' and 1 omega subunit. When a sigma factor is associated with the core the holoenzyme is formed, which can initiate transcription. Mg(2+) is required as a cofactor. Requires Zn(2+) as cofactor.

It catalyses the reaction RNA(n) + a ribonucleoside 5'-triphosphate = RNA(n+1) + diphosphate. In terms of biological role, DNA-dependent RNA polymerase catalyzes the transcription of DNA into RNA using the four ribonucleoside triphosphates as substrates. In Xanthomonas euvesicatoria pv. vesicatoria (strain 85-10) (Xanthomonas campestris pv. vesicatoria), this protein is DNA-directed RNA polymerase subunit beta'.